The sequence spans 298 residues: Protein pxr1 (298 aa).

Residues 1–11 show a composition bias toward basic residues; the sequence is MGLAAPRKRTK. Residues 1–23 are disordered; the sequence is MGLAAPRKRTKISHDPNNTNWAR. One can recognise a G-patch domain in the interval 25–79; the sequence is TSGFGHKILSSQGWTPGSFLGARDAAHADMFTAASAGHIRVVVKDDTLGLGARAG. The tract at residues 145-274 is disordered; that stretch reads LPERESVQQS…RPLGRQIVRG (130 aa). Residues 151 to 164 are compositionally biased toward polar residues; sequence VQQSRAAVETSDSN. Over residues 199-222 the composition is skewed to basic residues; it reads REKKEKKDKKEKKEKKDKKDKKRK. The segment covering 247 to 256 has biased composition (polar residues); that stretch reads GLESDSTSVS.

Belongs to the PINX1 family.

Its subcellular location is the nucleus. The protein localises to the nucleolus. Functionally, involved in rRNA-processing at A0, A1 and A2 sites and negatively regulates telomerase. The chain is Protein pxr1 (pxr1) from Aspergillus terreus (strain NIH 2624 / FGSC A1156).